The following is a 142-amino-acid chain: Peptidyl-prolyl cis-trans isomerase FKBP2 (142 aa).

The signal sequence occupies residues 1-21; the sequence is MRLSWFRVLTVLSICLSAVAT. The PPIase FKBP-type domain occupies 49 to 137; the sequence is GDVLHMHYTG…VFEVELLKIE (89 aa). The Prevents secretion from ER signature appears at 139–142; it reads RTEL.

The protein belongs to the FKBP-type PPIase family. FKBP2 subfamily. As to quaternary structure, interacts with ARFGEF1/BIG1 and the C-terminal of EPB41L2. As to expression, T-cells and thymus.

Its subcellular location is the endoplasmic reticulum membrane. It catalyses the reaction [protein]-peptidylproline (omega=180) = [protein]-peptidylproline (omega=0). Its activity is regulated as follows. Inhibited by both FK506 and rapamycin. Its function is as follows. PPIases accelerate the folding of proteins. It catalyzes the cis-trans isomerization of proline imidic peptide bonds in oligopeptides. This Homo sapiens (Human) protein is Peptidyl-prolyl cis-trans isomerase FKBP2 (FKBP2).